The sequence spans 192 residues: Phosphomevalonate kinase (192 aa).

ATP-binding positions include 17–23 (KRKSGKD) and Arg-141. Residue Asn-170 participates in substrate binding. ATP-binding residues include His-171, Arg-176, and Gln-180.

In terms of assembly, monomer. As to expression, heart, liver, skeletal muscle, kidney, and pancreas. Lower level in brain, placenta and lung.

The protein localises to the cytoplasm. It is found in the cytosol. It carries out the reaction (R)-5-phosphomevalonate + ATP = (R)-5-diphosphomevalonate + ADP. It functions in the pathway isoprenoid biosynthesis; isopentenyl diphosphate biosynthesis via mevalonate pathway; isopentenyl diphosphate from (R)-mevalonate: step 2/3. Catalyzes the reversible ATP-dependent phosphorylation of mevalonate 5-phosphate to produce mevalonate diphosphate and ADP, a key step in the mevalonic acid mediated biosynthesis of isopentenyl diphosphate and other polyisoprenoid metabolites. In Homo sapiens (Human), this protein is Phosphomevalonate kinase (PMVK).